Reading from the N-terminus, the 756-residue chain is Protein O-mannosyl-transferase 2 (756 aa).

Transmembrane regions (helical) follow at residues 64–84 (AHVP…TRFY), 110–130 (TFFF…AGYL), 156–176 (AFCA…VLEL), 179–199 (SSTA…CITL), 203–223 (ILLD…MVKF), 245–265 (CLSG…LVGI), and 293–313 (VFGL…IHFI). 3 consecutive MIR domains span residues 344–400 (PEYL…VKRL), 410–466 (PELV…VEVC), and 471–528 (GDPV…IEDH). A run of 4 helical transmembrane segments spans residues 602-622 (PVIW…LTVA), 643-663 (LMEG…PFYI), 672-692 (HYFP…DILL), and 713-733 (SVLL…SYGM).

This sequence belongs to the glycosyltransferase 39 family. In terms of tissue distribution, widely expressed. Has particularly strong expression in ovary, testis, liver, brain, muscle, heart and eye.

The protein resides in the endoplasmic reticulum membrane. The catalysed reaction is a di-trans,poly-cis-dolichyl beta-D-mannosyl phosphate + L-seryl-[protein] = 3-O-(alpha-D-mannosyl)-L-seryl-[protein] + a di-trans,poly-cis-dolichyl phosphate + H(+). The enzyme catalyses a di-trans,poly-cis-dolichyl beta-D-mannosyl phosphate + L-threonyl-[protein] = 3-O-(alpha-D-mannosyl)-L-threonyl-[protein] + a di-trans,poly-cis-dolichyl phosphate + H(+). It functions in the pathway protein modification; protein glycosylation. Functionally, transfers mannosyl residues to the hydroxyl group of serine or threonine residues. Coexpression of both POMT1 and POMT2 is necessary for enzyme activity, expression of either POMT1 or POMT2 alone is insufficient. The polypeptide is Protein O-mannosyl-transferase 2 (Danio rerio (Zebrafish)).